We begin with the raw amino-acid sequence, 494 residues long: Neuronal acetylcholine receptor subunit alpha-6 (494 aa).

The signal sequence occupies residues 1-25; it reads MLTSKGQGFLHGGLCLWLCVFTPFF. Over 26-239 the chain is Extracellular; that stretch reads KGCVGCATEE…ITYSFYIRRL (214 aa). Residues Asn54 and Asn171 are each glycosylated (N-linked (GlcNAc...) asparagine). Cystine bridges form between Cys158-Cys172 and Cys222-Cys223. Transmembrane regions (helical) follow at residues 240–264, 272–290, and 306–327; these read PMFY…VFYL, VTLC…LVIT, and YLLF…VLNI. Residues 328 to 465 are Cytoplasmic-facing; the sequence is HYRTPTTHTM…WKYVAMVVDR (138 aa). The residue at position 401 (Ser401) is a Phosphoserine. The helical transmembrane segment at 466 to 484 threads the bilayer; that stretch reads VFLWVFIIVCVFGTAGLFL.

This sequence belongs to the ligand-gated ion channel (TC 1.A.9) family. Acetylcholine receptor (TC 1.A.9.1) subfamily. Alpha-6/CHRNA6 sub-subfamily. Neuronal AChR is composed of two different types of subunits: alpha and non-alpha (beta). CHRNA6/alpha-6 subunit can be combined to CHRNB2/beta-2, CHRNA4/alpha-4 and CHRNB3/beta-3 to give rise to functional receptors. Heteropentamers containing CHRNB3 have an stoichiometry of (CHRNA6:CHRNB2)2:CHRNB3. Interacts with LYPD6.

Its subcellular location is the synaptic cell membrane. It carries out the reaction Ca(2+)(in) = Ca(2+)(out). The catalysed reaction is K(+)(in) = K(+)(out). The enzyme catalyses Na(+)(in) = Na(+)(out). With respect to regulation, activated by a myriad of ligands such as acetylcholine, cytisine and nicotine. CHRNA6 nAChR activity is inhibited by the antagonists alpha-conotoxin MII and PIA, a small disulfide-constrained peptides from cone snails. Component of neuronal acetylcholine receptors (nAChRs) that function as pentameric, ligand-gated cation channels with high calcium permeability among other activities. nAChRs are excitatory neurotrasnmitter receptors formed by a collection of nAChR subunits known to mediate synaptic transmission in the nervous system and the neuromuscular junction. Each nAchR subunit confers differential attributes to channel properties, including activation, deactivation and desensitization kinetics, pH sensitivity, cation permeability, and binding to allosteric modulators. CHRNA6 forms pentameric channels with CHRNB2, CHRNB3 and CHRNA4 that exhibit high sensitivity to ACh and nicotine and are predominantly expressed in only a few brain areas, including dopaminergic neurons, norepirephrine neurons and cells of the visual system. nAChrs containing CHRNA6 subunits mediate endogenous cholinergic modulation of dopamine and gamma-aminobutyric acid (GABA) release in response to nicotine at nerve terminals. The protein is Neuronal acetylcholine receptor subunit alpha-6 (CHRNA6) of Pan troglodytes (Chimpanzee).